A 327-amino-acid chain; its full sequence is DNA-directed RNA polymerase subunit alpha (327 aa).

Residues 1–233 are alpha N-terminal domain (alpha-NTD); the sequence is MVREKVKVST…NLFIPFLHVE (233 aa). The interval 267 to 327 is alpha C-terminal domain (alpha-CTD); the sequence is LAFQYIFIDQ…KKILDILEKK (61 aa).

Belongs to the RNA polymerase alpha chain family. In terms of assembly, in plastids the minimal PEP RNA polymerase catalytic core is composed of four subunits: alpha, beta, beta', and beta''. When a (nuclear-encoded) sigma factor is associated with the core the holoenzyme is formed, which can initiate transcription.

The protein localises to the plastid. It localises to the chloroplast. The catalysed reaction is RNA(n) + a ribonucleoside 5'-triphosphate = RNA(n+1) + diphosphate. Its function is as follows. DNA-dependent RNA polymerase catalyzes the transcription of DNA into RNA using the four ribonucleoside triphosphates as substrates. The sequence is that of DNA-directed RNA polymerase subunit alpha from Lepidium virginicum (Virginia pepperweed).